The sequence spans 406 residues: Tyrosine--tRNA ligase (406 aa).

Residue Tyr35 participates in L-tyrosine binding. Residues 40 to 49 (ATSASLHIGH) carry the 'HIGH' region motif. Positions 167 and 171 each coordinate L-tyrosine. Residues 227 to 231 (KMGKS) carry the 'KMSKS' region motif. Lys230 provides a ligand contact to ATP. The S4 RNA-binding domain maps to 341–405 (ILLVDLMVLA…IGKKKILRIV (65 aa)).

Belongs to the class-I aminoacyl-tRNA synthetase family. TyrS type 1 subfamily. Homodimer.

The protein localises to the cytoplasm. The enzyme catalyses tRNA(Tyr) + L-tyrosine + ATP = L-tyrosyl-tRNA(Tyr) + AMP + diphosphate + H(+). Functionally, catalyzes the attachment of tyrosine to tRNA(Tyr) in a two-step reaction: tyrosine is first activated by ATP to form Tyr-AMP and then transferred to the acceptor end of tRNA(Tyr). This Borrelia duttonii (strain Ly) protein is Tyrosine--tRNA ligase.